The primary structure comprises 519 residues: ATP synthase subunit beta, mitochondrial (519 aa).

Residue 195–202 (GGAGVGKT) coordinates ATP.

The protein belongs to the ATPase alpha/beta chains family. As to quaternary structure, F-type ATPases have 2 components, CF(1) - the catalytic core - and CF(0) - the membrane proton channel. CF(1) has five subunits: alpha(3), beta(3), gamma(1), delta(1), epsilon(1). CF(0) has three main subunits: a, b and c.

The protein resides in the mitochondrion. It localises to the mitochondrion inner membrane. The catalysed reaction is ATP + H2O + 4 H(+)(in) = ADP + phosphate + 5 H(+)(out). In terms of biological role, mitochondrial membrane ATP synthase (F(1)F(0) ATP synthase or Complex V) produces ATP from ADP in the presence of a proton gradient across the membrane which is generated by electron transport complexes of the respiratory chain. F-type ATPases consist of two structural domains, F(1) - containing the extramembraneous catalytic core, and F(0) - containing the membrane proton channel, linked together by a central stalk and a peripheral stalk. During catalysis, ATP synthesis in the catalytic domain of F(1) is coupled via a rotary mechanism of the central stalk subunits to proton translocation. Subunits alpha and beta form the catalytic core in F(1). Rotation of the central stalk against the surrounding alpha(3)beta(3) subunits leads to hydrolysis of ATP in three separate catalytic sites on the beta subunits. This chain is ATP synthase subunit beta, mitochondrial (atp-2), found in Neurospora crassa (strain ATCC 24698 / 74-OR23-1A / CBS 708.71 / DSM 1257 / FGSC 987).